Reading from the N-terminus, the 341-residue chain is Glycerol-3-phosphate dehydrogenase [NAD(P)+] (341 aa).

Positions 14, 15, 35, and 108 each coordinate NADPH. Sn-glycerol 3-phosphate-binding residues include K108 and G136. A140 is a binding site for NADPH. Sn-glycerol 3-phosphate-binding residues include K191, D244, S254, R255, and N256. K191 (proton acceptor) is an active-site residue. Position 255 (R255) interacts with NADPH. Residues V279 and E281 each contribute to the NADPH site.

Belongs to the NAD-dependent glycerol-3-phosphate dehydrogenase family.

Its subcellular location is the cytoplasm. The enzyme catalyses sn-glycerol 3-phosphate + NAD(+) = dihydroxyacetone phosphate + NADH + H(+). The catalysed reaction is sn-glycerol 3-phosphate + NADP(+) = dihydroxyacetone phosphate + NADPH + H(+). The protein operates within membrane lipid metabolism; glycerophospholipid metabolism. Its function is as follows. Catalyzes the reduction of the glycolytic intermediate dihydroxyacetone phosphate (DHAP) to sn-glycerol 3-phosphate (G3P), the key precursor for phospholipid synthesis. The sequence is that of Glycerol-3-phosphate dehydrogenase [NAD(P)+] from Pseudomonas putida (strain ATCC 47054 / DSM 6125 / CFBP 8728 / NCIMB 11950 / KT2440).